Here is a 277-residue protein sequence, read N- to C-terminus: 2,3,4,5-tetrahydropyridine-2,6-dicarboxylate N-succinyltransferase (277 aa).

The substrate site is built by Arg-106 and Asp-143.

Belongs to the transferase hexapeptide repeat family. Homotrimer.

It is found in the cytoplasm. The catalysed reaction is (S)-2,3,4,5-tetrahydrodipicolinate + succinyl-CoA + H2O = (S)-2-succinylamino-6-oxoheptanedioate + CoA. The protein operates within amino-acid biosynthesis; L-lysine biosynthesis via DAP pathway; LL-2,6-diaminopimelate from (S)-tetrahydrodipicolinate (succinylase route): step 1/3. This is 2,3,4,5-tetrahydropyridine-2,6-dicarboxylate N-succinyltransferase from Xylella fastidiosa (strain 9a5c).